The chain runs to 213 residues: Mite allergen Der f 7 (213 aa).

The N-terminal stretch at 1 to 17 (MMKFLLIAAVAFVAVSA) is a signal peptide. A glycan (N-linked (GlcNAc...) asparagine) is linked at N151.

Belongs to the mite group 7 allergen family.

The protein resides in the secreted. In Dermatophagoides farinae (American house dust mite), this protein is Mite allergen Der f 7 (DERF7).